Reading from the N-terminus, the 459-residue chain is Probable 1,4-beta-D-glucan cellobiohydrolase C (459 aa).

A signal peptide spans 1–18; that stretch reads MHYPLSLALAFLPFGIQA. The CBM1 domain maps to 19 to 54; it reads QQTLWGQCGGQGYSGATSCVAGATCATVNEYYAQCT. Cystine bridges form between cysteine 26-cysteine 43 and cysteine 37-cysteine 53. Residues 54-94 are thr-rich linker; that stretch reads TPAAGTSSATTLKTTTSSTTAAVTTTTTTQSPTGSASPTTT. A disordered region spans residues 76-97; that stretch reads VTTTTTTQSPTGSASPTTTASA. The tract at residues 95-459 is catalytic; that stretch reads ASASGNPFSG…QLLTNANPAF (365 aa). Aspartate 189 is a catalytic residue. Cysteine 190 and cysteine 249 are joined by a disulfide. Catalysis depends on aspartate 235, which acts as the Proton donor. An N-linked (GlcNAc...) asparagine glycan is attached at asparagine 303. A disulfide bridge connects residues cysteine 381 and cysteine 428. Aspartate 414 serves as the catalytic Nucleophile.

Belongs to the glycosyl hydrolase 6 (cellulase B) family.

Its subcellular location is the secreted. The enzyme catalyses Hydrolysis of (1-&gt;4)-beta-D-glucosidic linkages in cellulose and cellotetraose, releasing cellobiose from the non-reducing ends of the chains.. In terms of biological role, the biological conversion of cellulose to glucose generally requires three types of hydrolytic enzymes: (1) Endoglucanases which cut internal beta-1,4-glucosidic bonds; (2) Exocellobiohydrolases that cut the disaccharide cellobiose from the non-reducing end of the cellulose polymer chain; (3) Beta-1,4-glucosidases which hydrolyze the cellobiose and other short cello-oligosaccharides to glucose. In Aspergillus niger (strain ATCC MYA-4892 / CBS 513.88 / FGSC A1513), this protein is Probable 1,4-beta-D-glucan cellobiohydrolase C (cbhC).